Here is a 239-residue protein sequence, read N- to C-terminus: Geranylgeranylglyceryl phosphate synthase (239 aa).

Residues Asp-18 and Ser-45 each contribute to the Mg(2+) site. Sn-glycerol 1-phosphate-binding positions include 166-172, 197-198, and 219-220; these read YLEAGSG, GG, and GT.

The protein belongs to the GGGP/HepGP synthase family. Group II subfamily. Mg(2+) is required as a cofactor.

The protein resides in the cytoplasm. It catalyses the reaction sn-glycerol 1-phosphate + (2E,6E,10E)-geranylgeranyl diphosphate = sn-3-O-(geranylgeranyl)glycerol 1-phosphate + diphosphate. It functions in the pathway membrane lipid metabolism; glycerophospholipid metabolism. Functionally, prenyltransferase that catalyzes the transfer of the geranylgeranyl moiety of geranylgeranyl diphosphate (GGPP) to the C3 hydroxyl of sn-glycerol-1-phosphate (G1P). This reaction is the first ether-bond-formation step in the biosynthesis of archaeal membrane lipids. In Pyrobaculum arsenaticum (strain DSM 13514 / JCM 11321 / PZ6), this protein is Geranylgeranylglyceryl phosphate synthase.